A 212-amino-acid chain; its full sequence is NAD(P)H-hydrate epimerase (212 aa).

The YjeF N-terminal domain occupies 10–212 (MRSLERAAIA…IGVIVKPIGL (203 aa)). Residue 65–69 (NNGGD) coordinates (6S)-NADPHX. 2 residues coordinate K(+): Asn66 and Asp129. (6S)-NADPHX is bound by residues 133–139 (GLGLTRP) and Asp161. K(+) is bound at residue Ser164.

It belongs to the NnrE/AIBP family. K(+) is required as a cofactor.

The enzyme catalyses (6R)-NADHX = (6S)-NADHX. The catalysed reaction is (6R)-NADPHX = (6S)-NADPHX. Functionally, catalyzes the epimerization of the S- and R-forms of NAD(P)HX, a damaged form of NAD(P)H that is a result of enzymatic or heat-dependent hydration. This is a prerequisite for the S-specific NAD(P)H-hydrate dehydratase to allow the repair of both epimers of NAD(P)HX. The protein is NAD(P)H-hydrate epimerase of Rhodobacter capsulatus (strain ATCC BAA-309 / NBRC 16581 / SB1003).